The following is a 413-amino-acid chain: Putative F-box protein At3g58820 (413 aa).

Residues 1-48 (MDGVSSLPNELLCHILSFLTTKEAALTSILSKRWRNLIAFVPNLYIDD) form the F-box domain.

This is Putative F-box protein At3g58820 from Arabidopsis thaliana (Mouse-ear cress).